We begin with the raw amino-acid sequence, 332 residues long: L-lactate dehydrogenase A chain (332 aa).

Residues 29-57 (GAVG…VEDK) and arginine 99 each bind NAD(+). Residues arginine 106, asparagine 138, and arginine 169 each coordinate substrate. Position 138 (asparagine 138) interacts with NAD(+). Residue histidine 193 is the Proton acceptor of the active site. A substrate-binding site is contributed by threonine 248.

This sequence belongs to the LDH/MDH superfamily. LDH family. As to quaternary structure, homotetramer.

The protein localises to the cytoplasm. The catalysed reaction is (S)-lactate + NAD(+) = pyruvate + NADH + H(+). Its pathway is fermentation; pyruvate fermentation to lactate; (S)-lactate from pyruvate: step 1/1. Functionally, interconverts simultaneously and stereospecifically pyruvate and lactate with concomitant interconversion of NADH and NAD(+). This Gallus gallus (Chicken) protein is L-lactate dehydrogenase A chain (LDHA).